The sequence spans 530 residues: Glucose-6-phosphate isomerase (530 aa).

Residue Glu-356 is the Proton donor of the active site. Residues His-387 and Lys-502 contribute to the active site.

It belongs to the GPI family.

The protein localises to the cytoplasm. It catalyses the reaction alpha-D-glucose 6-phosphate = beta-D-fructose 6-phosphate. It functions in the pathway carbohydrate biosynthesis; gluconeogenesis. It participates in carbohydrate degradation; glycolysis; D-glyceraldehyde 3-phosphate and glycerone phosphate from D-glucose: step 2/4. In terms of biological role, catalyzes the reversible isomerization of glucose-6-phosphate to fructose-6-phosphate. This Borrelia garinii subsp. bavariensis (strain ATCC BAA-2496 / DSM 23469 / PBi) (Borreliella bavariensis) protein is Glucose-6-phosphate isomerase.